Consider the following 64-residue polypeptide: Large ribosomal subunit protein bL28 (64 aa).

Residues 1 to 23 (MSKECYFTGRKTVSSNNRSHAMN) are disordered. The span at 11-23 (KTVSSNNRSHAMN) shows a compositional bias: polar residues.

Belongs to the bacterial ribosomal protein bL28 family.

This Lactococcus lactis subsp. cremoris (strain SK11) protein is Large ribosomal subunit protein bL28.